Reading from the N-terminus, the 738-residue chain is Flagellar radial spoke protein 2 (738 aa).

The residue at position 104 (R104) is an Asymmetric dimethylarginine. 2 stretches are compositionally biased toward acidic residues: residues P134–A153 and E161–G182. Positions P134–I189 are disordered. An Asymmetric dimethylarginine modification is found at R260. Residues A357–V426 are disordered. Residues E371–E415 are compositionally biased toward acidic residues. Asymmetric dimethylarginine occurs at positions 453, 538, and 615. The interval A674–E738 is disordered. Over residues P689–S730 the composition is skewed to low complexity.

This sequence belongs to the dpy-30 family. Asymmetrically dimethylated at Arg-104, Arg-260, Arg-453, Arg-538 and Arg-615 during flagellum resorption. Probably methylated by PRMT1.

It is found in the cytoplasm. It localises to the cytoskeleton. The protein resides in the flagellum axoneme. Its function is as follows. Flagellar radial spokes contribute to the regulation of dynein arm activity and thus the pattern of flagellar bending. They consist of a thin stalk, which is attached to the a subfiber of the outer doublet microtubule, and a bulbous head, which is attached to the stalk and appears to interact with the projections from the central pair of microtubules. Binds calmodulin in a calcium-dependent manner. The sequence is that of Flagellar radial spoke protein 2 from Chlamydomonas reinhardtii (Chlamydomonas smithii).